The primary structure comprises 494 residues: UDP-N-acetylmuramoyl-L-alanyl-D-glutamate--2,6-diaminopimelate ligase (494 aa).

Serine 30 is a binding site for UDP-N-acetyl-alpha-D-muramoyl-L-alanyl-D-glutamate. 110–116 serves as a coordination point for ATP; the sequence is GTNGKTS. UDP-N-acetyl-alpha-D-muramoyl-L-alanyl-D-glutamate-binding positions include 152-153, serine 179, and arginine 187; that span reads TT. At lysine 219 the chain carries N6-carboxylysine. Residues arginine 380, 404 to 407, glycine 456, and glutamate 460 contribute to the meso-2,6-diaminopimelate site; that span reads DNPR. The Meso-diaminopimelate recognition motif motif lies at 404–407; the sequence is DNPR.

The protein belongs to the MurCDEF family. MurE subfamily. It depends on Mg(2+) as a cofactor. Post-translationally, carboxylation is probably crucial for Mg(2+) binding and, consequently, for the gamma-phosphate positioning of ATP.

It is found in the cytoplasm. The catalysed reaction is UDP-N-acetyl-alpha-D-muramoyl-L-alanyl-D-glutamate + meso-2,6-diaminopimelate + ATP = UDP-N-acetyl-alpha-D-muramoyl-L-alanyl-gamma-D-glutamyl-meso-2,6-diaminopimelate + ADP + phosphate + H(+). It participates in cell wall biogenesis; peptidoglycan biosynthesis. In terms of biological role, catalyzes the addition of meso-diaminopimelic acid to the nucleotide precursor UDP-N-acetylmuramoyl-L-alanyl-D-glutamate (UMAG) in the biosynthesis of bacterial cell-wall peptidoglycan. The protein is UDP-N-acetylmuramoyl-L-alanyl-D-glutamate--2,6-diaminopimelate ligase of Alkaliphilus metalliredigens (strain QYMF).